Reading from the N-terminus, the 839-residue chain is Amyloid-beta A4 precursor protein-binding family A member 1 (839 aa).

Disordered stretches follow at residues M1 to A118, R235 to D346, and V362 to K437. The span at E23–Q38 shows a compositional bias: acidic residues. S79 is subject to Phosphoserine. Composition is skewed to basic and acidic residues over residues D103–D112 and H237–E255. The segment at Y227–P315 is munc-18-1 binding. S243, S247, S249, S264, S281, and S286 each carry phosphoserine. T306 carries the phosphothreonine modification. A phosphoserine mark is found at S314 and S369. T372 is modified (phosphothreonine). Residues E375–S438 are LIN-2/CASK binding. The span at P389–D400 shows a compositional bias: basic and acidic residues. Positions G401–S417 are enriched in low complexity. S403, S405, S410, and S570 each carry phosphoserine. The region spanning D459–D645 is the PID domain. Residues L628 to Y643 are autoinhibitory helix linker. PDZ domains lie at D658–C744 and T749–A824.

Part of a multimeric complex containing STXBP1 and STX1A. Interacts with STXBP1. Component of the brain-specific heterotrimeric complex (LIN-10-LIN-2-LIN-7 complex) composed of at least APBA1, CASK, and LIN7, which associates with the motor protein KIF17 to transport vesicles along microtubules. Within the complex, interacts (via PDZ domain) with the motor protein KIF17; the interaction is direct and is required for association of KIF17 with the cargo that is to be transported. Binds to the cytoplasmic domain of amyloid protein (APP). Interacts (via PDZ 1 and 2 domains) with FSPB. Isoform 2 interacts (via its truncated PID domain) with active, GTP-bound RAB6A and RAB6B. As to expression, brain. Detected in the cerebellum, hippocampus, olfactory system, piriform and entorhinal cortex, supraoptic nucleus of the hypothalamus, substantia nigra, and other mesencephalic areas.

It is found in the cytoplasm. Its subcellular location is the perinuclear region. It localises to the nucleus. The protein localises to the golgi apparatus. In terms of biological role, putative function in synaptic vesicle exocytosis by binding to Munc18-1, an essential component of the synaptic vesicle exocytotic machinery. May modulate processing of the amyloid-beta precursor protein (APP) and hence formation of APP-beta. This Rattus norvegicus (Rat) protein is Amyloid-beta A4 precursor protein-binding family A member 1 (Apba1).